The following is a 306-amino-acid chain: UDP-3-O-acyl-N-acetylglucosamine deacetylase (306 aa).

Residues H79, H238, and D242 each coordinate Zn(2+). Residue H265 is the Proton donor of the active site.

It belongs to the LpxC family. It depends on Zn(2+) as a cofactor.

The catalysed reaction is a UDP-3-O-[(3R)-3-hydroxyacyl]-N-acetyl-alpha-D-glucosamine + H2O = a UDP-3-O-[(3R)-3-hydroxyacyl]-alpha-D-glucosamine + acetate. It functions in the pathway glycolipid biosynthesis; lipid IV(A) biosynthesis; lipid IV(A) from (3R)-3-hydroxytetradecanoyl-[acyl-carrier-protein] and UDP-N-acetyl-alpha-D-glucosamine: step 2/6. Its function is as follows. Catalyzes the hydrolysis of UDP-3-O-myristoyl-N-acetylglucosamine to form UDP-3-O-myristoylglucosamine and acetate, the committed step in lipid A biosynthesis. The protein is UDP-3-O-acyl-N-acetylglucosamine deacetylase of Shewanella violacea (strain JCM 10179 / CIP 106290 / LMG 19151 / DSS12).